The chain runs to 745 residues: uncharacterized protein (745 aa).

The 99-residue stretch at 158 to 256 (NQVCDYIELH…HQTPKQYRGD (99 aa)) folds into the HTH araC/xylS-type domain. 2 consecutive DNA-binding regions (H-T-H motif) follow at residues 175–196 (SELSEYVGWSESHLSKKFAESL) and 223–246 (ITDIALQNGFSSAASFARTFKHFT).

This is an uncharacterized protein from Staphylococcus aureus (strain MRSA252).